Here is a 442-residue protein sequence, read N- to C-terminus: Thymidine phosphorylase (442 aa).

This sequence belongs to the thymidine/pyrimidine-nucleoside phosphorylase family. In terms of assembly, homodimer.

The enzyme catalyses thymidine + phosphate = 2-deoxy-alpha-D-ribose 1-phosphate + thymine. It functions in the pathway pyrimidine metabolism; dTMP biosynthesis via salvage pathway; dTMP from thymine: step 1/2. The enzymes which catalyze the reversible phosphorolysis of pyrimidine nucleosides are involved in the degradation of these compounds and in their utilization as carbon and energy sources, or in the rescue of pyrimidine bases for nucleotide synthesis. The polypeptide is Thymidine phosphorylase (Pectobacterium atrosepticum (strain SCRI 1043 / ATCC BAA-672) (Erwinia carotovora subsp. atroseptica)).